The following is a 122-amino-acid chain: Large ribosomal subunit protein uL18 (122 aa).

This sequence belongs to the universal ribosomal protein uL18 family. In terms of assembly, part of the 50S ribosomal subunit; part of the 5S rRNA/L5/L18/L25 subcomplex. Contacts the 5S and 23S rRNAs.

This is one of the proteins that bind and probably mediate the attachment of the 5S RNA into the large ribosomal subunit, where it forms part of the central protuberance. The sequence is that of Large ribosomal subunit protein uL18 from Syntrophotalea carbinolica (strain DSM 2380 / NBRC 103641 / GraBd1) (Pelobacter carbinolicus).